A 469-amino-acid chain; its full sequence is MSVYLLHLASTHAHFHLPELETLAKIENVEFWLIPKSEYLNVAFKSDKSRNQALFSHAIKEFQDSISPNDATTQNPFMLAVVNSNEDARRWIRRSIFCKGIYEIYCIGDSFTRLHEKMKELNPAPWDSFKHNSSYKFTFETFGTRRTMKEQLSIISDFEYMQLQGPVSMHNPQHVFTVLENRRNNVEGPKVYFGHWCGSGSRDAIDTFDLKQRSYIGITSFDAELSLVTAQMAMAAPGKLIYDPFVGTGSFLYTCSFFGAHTLGSDIDGRQMRGKNGRSIKSNFRQYKLSPFFLDTFTGDVTNCPLRKNLLLDAIVCDPPYGVRAGAKKIAKCSQRPPKESSSTGNHYPKLEQYQISDMVYDIICFASDRLVDGGRLVLWLPTITEEYGIDDIPSHPYLSLIYNSIQPFTHWSRRLLTFQRLPRAHDSKSLNLLPKINNKTPSHHNFREKYFSSAGRASASTKFSPVLE.

It belongs to the class I-like SAM-binding methyltransferase superfamily. TRM11 methyltransferase family. Interacts with trm112.

It is found in the cytoplasm. Its subcellular location is the nucleus. The enzyme catalyses guanosine(10) in tRNA + S-adenosyl-L-methionine = N(2)-methylguanosine(10) in tRNA + S-adenosyl-L-homocysteine + H(+). Catalytic subunit of an S-adenosyl-L-methionine-dependent tRNA methyltransferase complex that mediates the methylation of the guanosine nucleotide at position 10 (m2G10) in tRNAs. This chain is tRNA (guanine(10)-N(2))-methyltransferase (trm11), found in Schizosaccharomyces pombe (strain 972 / ATCC 24843) (Fission yeast).